The primary structure comprises 173 residues: MNPRRKSRFKLVIFVVLGIAIASGLMLYALRQNIDLFYTPSEVIQGKDNNPNQKPEVGQRIRVGGMVVEGTVVRDPKSLKVRFDLNDIGPAITVEYEGILPDLFREGQGIVAQGVLTQSAVLSATEVLAKHDENYVPPELGEKMQKVHKPMGIKAADLKGESARDRQEKEGAK.

The Cytoplasmic segment spans residues 1–8 (MNPRRKSR). A helical; Signal-anchor for type II membrane protein transmembrane segment spans residues 9–29 (FKLVIFVVLGIAIASGLMLYA). The Periplasmic portion of the chain corresponds to 30–173 (LRQNIDLFYT…RDRQEKEGAK (144 aa)). 2 residues coordinate heme: H131 and Y135. The segment at 152 to 173 (GIKAADLKGESARDRQEKEGAK) is disordered. A compositionally biased stretch (basic and acidic residues) spans 156–173 (ADLKGESARDRQEKEGAK).

This sequence belongs to the CcmE/CycJ family.

Its subcellular location is the cell inner membrane. Its function is as follows. Heme chaperone required for the biogenesis of c-type cytochromes. Transiently binds heme delivered by CcmC and transfers the heme to apo-cytochromes in a process facilitated by CcmF and CcmH. This is Cytochrome c-type biogenesis protein CcmE from Haemophilus influenzae (strain PittEE).